The primary structure comprises 514 residues: MAMKFIAPMAFVAMQLIIMAAAEDQSAQIMLDSDIEQYLRSNRSLRKVEHSRHDAINIFNVEKYGAVGDGKHDCTEAFSTAWQAACKKPSAMLLVPGNKKFVVNNLFFNGPCQPHFTFKVDGIIAAYQNPASWKNNRIWLQFAKLTGFTLMGKGVIDGQGKQWWAGQCKWVNGREICNDRDRPTAIKFDFSTGLIIQGLKLMNSPEFHLVFGNCEGVKIIGISITAPRDSPNTDGIDIFASKNFHLQKNTIGTGDDCVAIGTGSSNIVIEDLICGPGHGISIGSLGRENSRAEVSYVHVNGAKFIDTQNGLRIKTWQGGSGMASHIIYENVEMINSENPILINQFYCTSASACQNQRSAVQIQDVTYKNIRGTSATAAAIQLKCSDSMPCKDIKLSDISLKLTSGKIASCLNDNANGYFSGHVIPACKNLSPSAKRKESKSHKHPKTVMVKNMGAYDKGNRTRILLGSRPPNCTNKCHGCSPCKAKLVIVHRIMPQEYYPQRWMCSRHGKIYHP.

The first 22 residues, 1-22 (MAMKFIAPMAFVAMQLIIMAAA), serve as a signal peptide directing secretion. Positions 23 to 45 (EDQSAQIMLDSDIEQYLRSNRSL) are excised as a propeptide. 5 PbH1 repeats span residues 214–240 (CEGV…DIFA), 241–262 (SKNF…AIGT), 264–284 (SSNI…SIGS), 294–315 (VSYV…RIKT), and 323–344 (ASHI…LINQ). The active-site Proton donor is Asp-255. His-278 is a catalytic residue. A propeptide spanning residues 434-514 (AKRKESKSHK…CSRHGKIYHP (81 aa)) is cleaved from the precursor. N-linked (GlcNAc...) asparagine glycosylation is found at Asn-460 and Asn-472.

Belongs to the glycosyl hydrolase 28 family.

Its subcellular location is the secreted. It localises to the plastid. It is found in the amyloplast. The protein localises to the cell wall. It catalyses the reaction (1,4-alpha-D-galacturonosyl)n+m + H2O = (1,4-alpha-D-galacturonosyl)n + (1,4-alpha-D-galacturonosyl)m.. The polypeptide is Polygalacturonase (Cryptomeria japonica (Japanese cedar)).